We begin with the raw amino-acid sequence, 223 residues long: Phosphoribosylformylglycinamidine synthase subunit PurQ (223 aa).

In terms of domain architecture, Glutamine amidotransferase type-1 spans 4–223 (KIGVITFPGT…FLSAVGTIAA (220 aa)). The active-site Nucleophile is Cys-87. Catalysis depends on residues His-195 and Glu-197.

As to quaternary structure, part of the FGAM synthase complex composed of 1 PurL, 1 PurQ and 2 PurS subunits.

The protein localises to the cytoplasm. The enzyme catalyses N(2)-formyl-N(1)-(5-phospho-beta-D-ribosyl)glycinamide + L-glutamine + ATP + H2O = 2-formamido-N(1)-(5-O-phospho-beta-D-ribosyl)acetamidine + L-glutamate + ADP + phosphate + H(+). It catalyses the reaction L-glutamine + H2O = L-glutamate + NH4(+). It functions in the pathway purine metabolism; IMP biosynthesis via de novo pathway; 5-amino-1-(5-phospho-D-ribosyl)imidazole from N(2)-formyl-N(1)-(5-phospho-D-ribosyl)glycinamide: step 1/2. Functionally, part of the phosphoribosylformylglycinamidine synthase complex involved in the purines biosynthetic pathway. Catalyzes the ATP-dependent conversion of formylglycinamide ribonucleotide (FGAR) and glutamine to yield formylglycinamidine ribonucleotide (FGAM) and glutamate. The FGAM synthase complex is composed of three subunits. PurQ produces an ammonia molecule by converting glutamine to glutamate. PurL transfers the ammonia molecule to FGAR to form FGAM in an ATP-dependent manner. PurS interacts with PurQ and PurL and is thought to assist in the transfer of the ammonia molecule from PurQ to PurL. This chain is Phosphoribosylformylglycinamidine synthase subunit PurQ, found in Corynebacterium glutamicum (strain ATCC 13032 / DSM 20300 / JCM 1318 / BCRC 11384 / CCUG 27702 / LMG 3730 / NBRC 12168 / NCIMB 10025 / NRRL B-2784 / 534).